Consider the following 659-residue polypeptide: MPNSHGNVLNNISLNSKQNPRSISKSCPNDKDARQKSFKTISAQALVRVQGAGYKLGDVKLKDAEVKEKNSLKKYDCKNATQEKKEQEQVFEKTVAKGSVQKYITKTSKTNSLFIGNLKSTVTEEMLRKIFKRYQSFESAKVCRDFLTKKSLGYGYLNFKDKNDAESARKEFNYTVFFGQEVKIMPSMKNTLFRKNIGTNVFFSNLPLENPQLTTRSFYLIMIEYGNVLSCLLERRKNIGFVYFDNDISARNVIKKYNNQEFFGNKIICGLHFDKEVRTRPEFTKRKKMIGSDIVIEDELLASNNLSDNARSKTILVKNLPSDTTQEEVLDYFSTIGPIKSVFISEKQANTPHKAFVTYKNEEESKKAQKCLNKTIFKNHTIWVGPGKDKPVHNQIGTNKKTKVYLKNLSFNCNKEFISQLCLQEKIRFSEIKITNYNSLNWTFCGHVECFSRSDAERLFNILDRRLIGSSLVEASWSKNNDNILNEIDYDDGNNNENYKKLINISSMMRFRTQELSAHQKGLTSQFQQVVSPFSSYSNSYTNMNSLVATPMKPHPAFNLITNTVDEKLHQPKRTKQENAEILESLKKIINRNLQRISISGLNKEENLRSISEFIFDVFWEHDSERLSHFLLMTNTSLESQKILQKQVTRAAESLGFTV.

Over residues methionine 1 to cysteine 27 the composition is skewed to polar residues. A disordered region spans residues methionine 1–glutamine 35. RRM domains are found at residues asparagine 111 to lysine 189, threonine 199 to isoleucine 267, and lysine 313 to aspartate 389.

As to quaternary structure, interacts with MEX67.

It localises to the cytoplasm. The protein is RNA-binding protein MIP6 (MIP6) of Saccharomyces cerevisiae (strain ATCC 204508 / S288c) (Baker's yeast).